The chain runs to 155 residues: Large ribosomal subunit protein uL15 (155 aa).

A compositionally biased stretch (basic and acidic residues) spans 1–13 (MKLNELRDCEGAT). Positions 1–47 (MKLNELRDCEGATKNRKRIGRGIGSGTGKTGGRGVKGQKSRSGVSLN) are disordered. Positions 21-35 (RGIGSGTGKTGGRGV) are enriched in gly residues.

It belongs to the universal ribosomal protein uL15 family. In terms of assembly, part of the 50S ribosomal subunit.

Binds to the 23S rRNA. This is Large ribosomal subunit protein uL15 from Bartonella tribocorum (strain CIP 105476 / IBS 506).